The following is a 207-amino-acid chain: Thiamine-phosphate synthase (207 aa).

Residues 36–40 and N68 each bind 4-amino-2-methyl-5-(diphosphooxymethyl)pyrimidine; that span reads QLRLK. Mg(2+) is bound by residues D69 and D88. T107 provides a ligand contact to 4-amino-2-methyl-5-(diphosphooxymethyl)pyrimidine. Residue 134 to 136 participates in 2-[(2R,5Z)-2-carboxy-4-methylthiazol-5(2H)-ylidene]ethyl phosphate binding; it reads TGT. K137 lines the 4-amino-2-methyl-5-(diphosphooxymethyl)pyrimidine pocket. A 2-[(2R,5Z)-2-carboxy-4-methylthiazol-5(2H)-ylidene]ethyl phosphate-binding site is contributed by G164.

It belongs to the thiamine-phosphate synthase family. Mg(2+) is required as a cofactor.

It catalyses the reaction 2-[(2R,5Z)-2-carboxy-4-methylthiazol-5(2H)-ylidene]ethyl phosphate + 4-amino-2-methyl-5-(diphosphooxymethyl)pyrimidine + 2 H(+) = thiamine phosphate + CO2 + diphosphate. The enzyme catalyses 2-(2-carboxy-4-methylthiazol-5-yl)ethyl phosphate + 4-amino-2-methyl-5-(diphosphooxymethyl)pyrimidine + 2 H(+) = thiamine phosphate + CO2 + diphosphate. The catalysed reaction is 4-methyl-5-(2-phosphooxyethyl)-thiazole + 4-amino-2-methyl-5-(diphosphooxymethyl)pyrimidine + H(+) = thiamine phosphate + diphosphate. It functions in the pathway cofactor biosynthesis; thiamine diphosphate biosynthesis; thiamine phosphate from 4-amino-2-methyl-5-diphosphomethylpyrimidine and 4-methyl-5-(2-phosphoethyl)-thiazole: step 1/1. Its function is as follows. Condenses 4-methyl-5-(beta-hydroxyethyl)thiazole monophosphate (THZ-P) and 2-methyl-4-amino-5-hydroxymethyl pyrimidine pyrophosphate (HMP-PP) to form thiamine monophosphate (TMP). This Rhodospirillum centenum (strain ATCC 51521 / SW) protein is Thiamine-phosphate synthase.